The chain runs to 222 residues: Probable transaldolase (222 aa).

Residue Lys91 is the Schiff-base intermediate with substrate of the active site.

It belongs to the transaldolase family. Type 3B subfamily.

The protein localises to the cytoplasm. It carries out the reaction D-sedoheptulose 7-phosphate + D-glyceraldehyde 3-phosphate = D-erythrose 4-phosphate + beta-D-fructose 6-phosphate. The protein operates within carbohydrate degradation; pentose phosphate pathway; D-glyceraldehyde 3-phosphate and beta-D-fructose 6-phosphate from D-ribose 5-phosphate and D-xylulose 5-phosphate (non-oxidative stage): step 2/3. Functionally, transaldolase is important for the balance of metabolites in the pentose-phosphate pathway. The chain is Probable transaldolase from Pelodictyon phaeoclathratiforme (strain DSM 5477 / BU-1).